Consider the following 718-residue polypeptide: Phenylalanine--tRNA ligase beta subunit (718 aa).

Residues 40 to 153 (FLNVSKIKFG…KADLKQDPID (114 aa)) enclose the tRNA-binding domain. The region spanning 387-462 (DKKESFNFVW…RFYGYENLVF (76 aa)) is the B5 domain. Residues D440, D446, E449, and E450 each coordinate Mg(2+).

This sequence belongs to the phenylalanyl-tRNA synthetase beta subunit family. Type 1 subfamily. Tetramer of two alpha and two beta subunits. The cofactor is Mg(2+).

The protein localises to the cytoplasm. It catalyses the reaction tRNA(Phe) + L-phenylalanine + ATP = L-phenylalanyl-tRNA(Phe) + AMP + diphosphate + H(+). The polypeptide is Phenylalanine--tRNA ligase beta subunit (Mycoplasmopsis pulmonis (strain UAB CTIP) (Mycoplasma pulmonis)).